The primary structure comprises 225 residues: Putative membrane protease YugP (225 aa).

Histidine 95 provides a ligand contact to Zn(2+). Glutamate 96 is a catalytic residue. Zn(2+) is bound by residues histidine 99 and histidine 103. The next 3 membrane-spanning stretches (helical) occupy residues 116 to 138 (IFPV…MLLG), 140 to 162 (LNLI…ITLP), and 192 to 212 (VLSA…FELL).

The protein resides in the cell membrane. The protein is Putative membrane protease YugP (yugP) of Bacillus subtilis (strain 168).